The sequence spans 380 residues: Cytochrome b (380 aa).

4 helical membrane-spanning segments follow: residues 34 to 54, 78 to 99, 114 to 134, and 179 to 199; these read FGSLLTICLLTQILTGLLLAM, WLIRNLHANGASFFFICIYLHI, WNTGVILLLTLMATAFVGYVL, and FFALHFLLPFMIVGLSMIHLT. His-84 and His-98 together coordinate heme b. Heme b is bound by residues His-183 and His-197. An a ubiquinone-binding site is contributed by His-202. The next 4 helical transmembrane spans lie at 227-247, 289-309, 321-341, and 348-368; these read LKDILGFILMLLPLTTLALFS, LGGVLALAASVLILFLAPFLH, ISQLLFWILVANLLILTWVGS, and FIIIGQLASITYFTILLILFP.

The protein belongs to the cytochrome b family. As to quaternary structure, the cytochrome bc1 complex contains 11 subunits: 3 respiratory subunits (MT-CYB, CYC1 and UQCRFS1), 2 core proteins (UQCRC1 and UQCRC2) and 6 low-molecular weight proteins (UQCRH/QCR6, UQCRB/QCR7, UQCRQ/QCR8, UQCR10/QCR9, UQCR11/QCR10 and a cleavage product of UQCRFS1). This cytochrome bc1 complex then forms a dimer. Heme b is required as a cofactor.

It localises to the mitochondrion inner membrane. In terms of biological role, component of the ubiquinol-cytochrome c reductase complex (complex III or cytochrome b-c1 complex) that is part of the mitochondrial respiratory chain. The b-c1 complex mediates electron transfer from ubiquinol to cytochrome c. Contributes to the generation of a proton gradient across the mitochondrial membrane that is then used for ATP synthesis. This chain is Cytochrome b (MT-CYB), found in Pelecanoides garnotii (Peruvian diving petrel).